A 218-amino-acid polypeptide reads, in one-letter code: Recombination protein RecR (218 aa).

The C4-type zinc-finger motif lies at 56-71 (CRICCNISREEVCRIC). Positions 79–195 (STICVVEEPK…VVSRLASGMP (117 aa)) constitute a Toprim domain.

The protein belongs to the RecR family.

Functionally, may play a role in DNA repair. It seems to be involved in an RecBC-independent recombinational process of DNA repair. It may act with RecF and RecO. This chain is Recombination protein RecR, found in Corynebacterium diphtheriae (strain ATCC 700971 / NCTC 13129 / Biotype gravis).